Consider the following 365-residue polypeptide: Succinyl-diaminopimelate desuccinylase (365 aa).

His65 lines the Zn(2+) pocket. The active site involves Asp67. Position 96 (Asp96) interacts with Zn(2+). The active-site Proton acceptor is Glu126. Zn(2+) is bound by residues Glu127, Glu155, and His340.

Belongs to the peptidase M20A family. DapE subfamily. As to quaternary structure, homodimer. Requires Zn(2+) as cofactor. Co(2+) serves as cofactor.

The enzyme catalyses N-succinyl-(2S,6S)-2,6-diaminopimelate + H2O = (2S,6S)-2,6-diaminopimelate + succinate. Its pathway is amino-acid biosynthesis; L-lysine biosynthesis via DAP pathway; LL-2,6-diaminopimelate from (S)-tetrahydrodipicolinate (succinylase route): step 3/3. Catalyzes the hydrolysis of N-succinyl-L,L-diaminopimelic acid (SDAP), forming succinate and LL-2,6-diaminopimelate (DAP), an intermediate involved in the bacterial biosynthesis of lysine and meso-diaminopimelic acid, an essential component of bacterial cell walls. In Campylobacter jejuni subsp. jejuni serotype O:23/36 (strain 81-176), this protein is Succinyl-diaminopimelate desuccinylase.